Here is a 330-residue protein sequence, read N- to C-terminus: Autoinducer 2 import system permease protein LsrD (330 aa).

Residues 1–4 lie on the Cytoplasmic side of the membrane; that stretch reads MRIR. A helical transmembrane segment spans residues 5–25; sequence YGWELALAALLVIEIVAFGAI. The Periplasmic portion of the chain corresponds to 26–42; sequence NPRMLDLNMLLFSTSDF. Residues 43-63 traverse the membrane as a helical segment; the sequence is ICIGIVALPLTMVIVSGGIDI. Over 64–67 the chain is Cytoplasmic; that stretch reads SFGS. Helical transmembrane passes span 68-88 and 89-109; these read TIGLCAIALGVLFQSGVPMPL and AILLTLLLGALCGLINAGLII. The Cytoplasmic portion of the chain corresponds to 110-115; that stretch reads YTKVNP. A helical membrane pass occupies residues 116 to 136; it reads LVITLGTLYLFAGSALLLSGM. At 137 to 159 the chain is on the periplasmic side; sequence AGATGYEGIGGFPMAFTDFANLD. The helical transmembrane segment at 160–180 threads the bilayer; that stretch reads VLGLPVPLIIFLICLLVFWLW. Residues 181-209 lie on the Cytoplasmic side of the membrane; the sequence is LHKTHAGRNVFLIGQSPRVAVYSAIPVNR. Residues 210 to 230 form a helical membrane-spanning segment; the sequence is TLCALYAMTGLASAVAAVLLV. Topologically, residues 231–237 are periplasmic; it reads SYFGSAR. 2 helical membrane passes run 238 to 258 and 259 to 279; these read SDLGASFLMPAITAVVLGGAN and IYGGSGSIIGTAIAVLLVGYL. Over 280–285 the chain is Periplasmic; that stretch reads QQGLQM. A helical membrane pass occupies residues 286-306; it reads AGVPNQVSSALSGALLIVVVV. Residues 307 to 330 are Cytoplasmic-facing; the sequence is GRSVSLHRQQIKEWLARRANNPLP.

The protein belongs to the binding-protein-dependent transport system permease family. AraH/RbsC subfamily. In terms of assembly, the complex is composed of two ATP-binding proteins (LsrA), two transmembrane proteins (LsrC and LsrD) and a solute-binding protein (LsrB).

It is found in the cell inner membrane. Functionally, part of the ABC transporter complex LsrABCD involved in autoinducer 2 (AI-2) import. Probably responsible for the translocation of the substrate across the membrane. This is Autoinducer 2 import system permease protein LsrD (lsrD) from Escherichia coli (strain SMS-3-5 / SECEC).